Reading from the N-terminus, the 2176-residue chain is Nonribosomal peptide synthetase sirP (2176 aa).

The segment covering 16-31 (EGLTGDDHSPESRRDF) has biased composition (basic and acidic residues). The tract at residues 16–38 (EGLTGDDHSPESRRDFPMSQSSG) is disordered. Positions 51-434 (FERIASQFPE…LGRKDRVVKN (384 aa)) are adenylation 1. The region spanning 534 to 610 (SSPSSNLYVV…RICDTLSATI (77 aa)) is the Carrier 1 domain. Ser-571 is subject to O-(pantetheine 4'-phosphoryl)serine. The tract at residues 643–1073 (YMTAIQVNMI…MMNQLEINDL (431 aa)) is condensation 1. An adenylation 2 region spans residues 1094–1474 (FEEVVDTWPD…GRIDNQVKVR (381 aa)). Residues 1570-1646 (PIEGTTERII…DLALAIDKHI (77 aa)) enclose the Carrier 2 domain. Position 1606 is an O-(pantetheine 4'-phosphoryl)serine (Ser-1606). Residues 1661 to 2070 (QNTVLSHLEE…VQLMAAFRYL (410 aa)) are condensation 2. In terms of domain architecture, Carrier 3 spans 2106–2176 (QEMIDLVREA…TAELIAGAVE (71 aa)). Ser-2140 is modified (O-(pantetheine 4'-phosphoryl)serine).

This sequence belongs to the NRP synthetase family.

The protein operates within mycotoxin biosynthesis. Functionally, nonribosomal peptide synthetase; part of the gene cluster that mediates the biosynthesis of sirodesmin PL, an epipolythiodioxopiperazine (ETP) characterized by a disulfide bridged cyclic dipeptide and that acts as a phytotoxin which is involved in the blackleg didease of canola. SirD catalyzes the O-prenylation of L-tyrosine (L-Tyr) in the presence of dimethylallyl diphosphate (DMAPP) to yield 4-O-dimethylallyl-L-Tyr, and therefore represents probably the first pathway-specific enzyme in the biosynthesis of sirodesmin PL. 4-O-dimethylallyl-L-Tyr, then undergoes condensation with L-Ser in a reaction catalyzed by the non-ribosomal peptide synthase sirP to form the diketopiperazine (DKP) backbone. Further bishydroxylation of the DKP performed by the cytochrome P450 monooxygenase sirC leads to the production of the intermediate phomamide. This step is essential to form the reactive thiol group required for toxicity of sirodesmin PL. The next steps of sirodesmin biosynthesis are not well understood yet, but some predictions could be made from intermediate compounds identification. Phomamide is converted into phomalizarine via oxidation, probably by sirT. Further oxidation, methylation (by sirM or sirN) and reduction steps convert phomalizarine to deacetyl sirodesmin. Finally, acetyltransferase sirH probably acetylates deacetyl sirodesmin to produce sirodesmin PL. This Leptosphaeria maculans (Blackleg fungus) protein is Nonribosomal peptide synthetase sirP.